The sequence spans 136 residues: Riboflavin kinase (136 aa).

15–20 (GLGEGR) contributes to the CDP binding site. Positions 44 and 46 each coordinate Mg(2+). The FMN site is built by Thr-103 and Glu-111. 116 to 119 (YYLR) lines the CDP pocket.

Belongs to the archaeal riboflavin kinase family. It depends on Mg(2+) as a cofactor.

It catalyses the reaction riboflavin + CTP = CDP + FMN + H(+). It functions in the pathway cofactor biosynthesis; FMN biosynthesis; FMN from riboflavin (CTP route): step 1/1. Functionally, catalyzes the CTP-dependent phosphorylation of riboflavin (vitamin B2) to form flavin mononucleotide (FMN). The polypeptide is Riboflavin kinase (Sulfurisphaera tokodaii (strain DSM 16993 / JCM 10545 / NBRC 100140 / 7) (Sulfolobus tokodaii)).